We begin with the raw amino-acid sequence, 145 residues long: Lipoprotein signal peptidase (145 aa).

The next 3 helical transmembrane spans lie at 1 to 21 (MVYIVVLIVILLDQMVKLLVM), 57 to 77 (YLFIVITVVVISFLLIYYYKT), and 79 to 99 (GSGMVTLSTGLIIGGALGNLI). Catalysis depends on residues Asp-109 and Asp-123. A helical transmembrane segment spans residues 115-135 (IWPVFNLADSSVVIGAALLIL).

Belongs to the peptidase A8 family.

The protein localises to the cell inner membrane. The enzyme catalyses Release of signal peptides from bacterial membrane prolipoproteins. Hydrolyzes -Xaa-Yaa-Zaa-|-(S,diacylglyceryl)Cys-, in which Xaa is hydrophobic (preferably Leu), and Yaa (Ala or Ser) and Zaa (Gly or Ala) have small, neutral side chains.. It participates in protein modification; lipoprotein biosynthesis (signal peptide cleavage). Functionally, this protein specifically catalyzes the removal of signal peptides from prolipoproteins. This is Lipoprotein signal peptidase from Halothermothrix orenii (strain H 168 / OCM 544 / DSM 9562).